Reading from the N-terminus, the 32-residue chain is C-reactive protein (32 aa).

Positions 2 to 32 constitute a Pentraxin (PTX) domain; sequence VIKTLVFQSESNNSFVELIPMKPLNLRAFXL.

It belongs to the pentraxin family. In terms of assembly, homopentamer. Pentraxin (or pentaxin) have a discoid arrangement of 5 non-covalently bound subunits. Glycosylated.

The protein localises to the secreted. Displays several functions associated with host defense: it promotes agglutination, bacterial capsular swelling, phagocytosis, and complement fixation through its calcium-dependent binding to phosphorylcholine. This Pleuronectes platessa (European plaice) protein is C-reactive protein.